Reading from the N-terminus, the 301-residue chain is Putative S-adenosyl-L-methionine-dependent methyltransferase MUL_0450 (301 aa).

S-adenosyl-L-methionine-binding positions include D127 and 156–157; that span reads DL.

Belongs to the UPF0677 family.

Its function is as follows. Exhibits S-adenosyl-L-methionine-dependent methyltransferase activity. This Mycobacterium ulcerans (strain Agy99) protein is Putative S-adenosyl-L-methionine-dependent methyltransferase MUL_0450.